A 633-amino-acid polypeptide reads, in one-letter code: Probable extracellular metalloproteinase 5 (633 aa).

The first 20 residues, Met1–Ala20, serve as a signal peptide directing secretion. A propeptide spanning residues His21–His244 is cleaved from the precursor. The N-linked (GlcNAc...) asparagine glycan is linked to Asn285. His428 is a Zn(2+) binding site. Residue Glu429 is part of the active site. Residue His432 coordinates Zn(2+). Asn592 and Asn621 each carry an N-linked (GlcNAc...) asparagine glycan.

The protein belongs to the peptidase M36 family. It depends on Zn(2+) as a cofactor.

The protein localises to the secreted. Its function is as follows. Secreted metalloproteinase probably acting as a virulence factor. The polypeptide is Probable extracellular metalloproteinase 5 (MEP5) (Arthroderma benhamiae (strain ATCC MYA-4681 / CBS 112371) (Trichophyton mentagrophytes)).